The primary structure comprises 93 residues: UPF0473 protein RBAM_024480 (93 aa).

It belongs to the UPF0473 family.

The protein is UPF0473 protein RBAM_024480 of Bacillus velezensis (strain DSM 23117 / BGSC 10A6 / LMG 26770 / FZB42) (Bacillus amyloliquefaciens subsp. plantarum).